Consider the following 212-residue polypeptide: Protein-L-isoaspartate O-methyltransferase (212 aa).

Serine 62 is an active-site residue.

Belongs to the methyltransferase superfamily. L-isoaspartyl/D-aspartyl protein methyltransferase family.

The protein localises to the cytoplasm. The enzyme catalyses [protein]-L-isoaspartate + S-adenosyl-L-methionine = [protein]-L-isoaspartate alpha-methyl ester + S-adenosyl-L-homocysteine. Catalyzes the methyl esterification of L-isoaspartyl residues in peptides and proteins that result from spontaneous decomposition of normal L-aspartyl and L-asparaginyl residues. It plays a role in the repair and/or degradation of damaged proteins. This is Protein-L-isoaspartate O-methyltransferase from Pseudoalteromonas translucida (strain TAC 125).